The following is a 270-amino-acid chain: uncharacterized protein (270 aa).

Disordered regions lie at residues 1-21 (MSTN…YEKP) and 53-77 (PNIL…AKLN). Over residues 58–75 (SKHDGDKNKNDKKKEDAK) the composition is skewed to basic and acidic residues. A coiled-coil region spans residues 182-270 (EENKSREEKH…KIEDNLNTYE (89 aa)).

This is an uncharacterized protein from Plasmodium falciparum (isolate 3D7).